The following is a 180-amino-acid chain: O-acetyl-ADP-ribose deacetylase (180 aa).

One can recognise a Macro domain in the interval 1–175 (MSGRINVVQG…LYQRLLGQYD (175 aa)). Residues 11 to 12 (DI), asparagine 25, 33 to 35 (GVD), and 122 to 126 (STGIY) each bind substrate. Aspartate 35 serves as the catalytic Proton acceptor.

It belongs to the MacroD-type family. YmdB subfamily. As to quaternary structure, homodimer. Interacts with RNase III.

It carries out the reaction 3''-O-acetyl-ADP-D-ribose + H2O = ADP-D-ribose + acetate + H(+). The enzyme catalyses 2''-O-acetyl-ADP-D-ribose + H2O = ADP-D-ribose + acetate + H(+). In terms of biological role, deacetylates O-acetyl-ADP ribose to yield ADP-ribose and free acetate. Down-regulates ribonuclease 3 (RNase III) activity. Acts by interacting directly with the region of the ribonuclease that is required for dimerization/activation. The chain is O-acetyl-ADP-ribose deacetylase from Cronobacter sakazakii (strain ATCC BAA-894) (Enterobacter sakazakii).